Reading from the N-terminus, the 119-residue chain is Beta-2-microglobulin (119 aa).

Positions M1 to A20 are cleaved as a signal peptide. One can recognise an Ig-like C1-type domain in the interval P25–K114. C45 and C100 are disulfide-bonded.

It belongs to the beta-2-microglobulin family. In terms of assembly, heterodimer of an alpha chain and a beta chain. Beta-2-microglobulin is the beta-chain of major histocompatibility complex class I molecules.

The protein localises to the secreted. Component of the class I major histocompatibility complex (MHC). Involved in the presentation of peptide antigens to the immune system. This is Beta-2-microglobulin (B2M) from Ateles paniscus (Black spider monkey).